The primary structure comprises 1897 residues: uncharacterized protein (1897 aa).

Residues 1661 to 1888 form the Peptidase S74 domain; sequence SDERVKTNIR…AKVISLESRL (228 aa). Residues 1865 to 1894 are a coiled coil; sequence AALQEIDRQLQLEKAKVISLESRLSALELK.

This is an uncharacterized protein from Micromonas pusilla (Picoplanktonic green alga).